A 232-amino-acid chain; its full sequence is Ribosome maturation protein SDO1 homolog (232 aa).

It belongs to the SDO1/SBDS family.

The protein is Ribosome maturation protein SDO1 homolog of Methanothermobacter thermautotrophicus (strain ATCC 29096 / DSM 1053 / JCM 10044 / NBRC 100330 / Delta H) (Methanobacterium thermoautotrophicum).